The primary structure comprises 557 residues: Potassium-transporting ATPase potassium-binding subunit (557 aa).

Transmembrane regions (helical) follow at residues 5–25 (GFLL…PLGS), 63–83 (LSAI…MLLG), 132–152 (GLTV…FALI), 170–190 (LLRI…LFFI), 253–273 (FVQM…FGEV), 283–303 (LLWA…WAEV), 329–349 (VLVS…AVIA), 356–376 (ALGG…FGGV), 379–399 (GLYG…LMIG), 416–436 (LTAL…ALAM), 484–504 (LLAL…MAIA), and 526–546 (LFVG…FIPA).

It belongs to the KdpA family. The system is composed of three essential subunits: KdpA, KdpB and KdpC.

The protein localises to the cell inner membrane. Functionally, part of the high-affinity ATP-driven potassium transport (or Kdp) system, which catalyzes the hydrolysis of ATP coupled with the electrogenic transport of potassium into the cytoplasm. This subunit binds the periplasmic potassium ions and delivers the ions to the membrane domain of KdpB through an intramembrane tunnel. In Escherichia coli O6:H1 (strain CFT073 / ATCC 700928 / UPEC), this protein is Potassium-transporting ATPase potassium-binding subunit.